The following is a 110-amino-acid chain: Phosphoribosyl-ATP pyrophosphatase (110 aa).

This sequence belongs to the PRA-PH family.

The protein resides in the cytoplasm. The enzyme catalyses 1-(5-phospho-beta-D-ribosyl)-ATP + H2O = 1-(5-phospho-beta-D-ribosyl)-5'-AMP + diphosphate + H(+). It functions in the pathway amino-acid biosynthesis; L-histidine biosynthesis; L-histidine from 5-phospho-alpha-D-ribose 1-diphosphate: step 2/9. The polypeptide is Phosphoribosyl-ATP pyrophosphatase (Clostridium botulinum (strain Kyoto / Type A2)).